The primary structure comprises 456 residues: Bifunctional protein GlmU (456 aa).

Residues 1 to 229 (MLNNAMSVVI…LSEVEGVNNR (229 aa)) form a pyrophosphorylase region. Residues 11–14 (LAAG), Lys25, Gln76, 81–82 (GT), 103–105 (YGD), Gly140, Glu154, Asn169, and Asn227 contribute to the UDP-N-acetyl-alpha-D-glucosamine site. Residue Asp105 participates in Mg(2+) binding. A Mg(2+)-binding site is contributed by Asn227. Residues 230–250 (LQLSRLERVYQSEQAEKLLLA) form a linker region. An N-acetyltransferase region spans residues 251–456 (GVMLRDPARF…EGWRRPVKKK (206 aa)). Positions 333 and 351 each coordinate UDP-N-acetyl-alpha-D-glucosamine. The Proton acceptor role is filled by His363. UDP-N-acetyl-alpha-D-glucosamine is bound by residues Tyr366 and Asn377. Residues Ala380, 386 to 387 (NY), Ser405, Ala423, and Arg440 contribute to the acetyl-CoA site.

It in the N-terminal section; belongs to the N-acetylglucosamine-1-phosphate uridyltransferase family. The protein in the C-terminal section; belongs to the transferase hexapeptide repeat family. In terms of assembly, homotrimer. The cofactor is Mg(2+).

The protein resides in the cytoplasm. It carries out the reaction alpha-D-glucosamine 1-phosphate + acetyl-CoA = N-acetyl-alpha-D-glucosamine 1-phosphate + CoA + H(+). The catalysed reaction is N-acetyl-alpha-D-glucosamine 1-phosphate + UTP + H(+) = UDP-N-acetyl-alpha-D-glucosamine + diphosphate. It functions in the pathway nucleotide-sugar biosynthesis; UDP-N-acetyl-alpha-D-glucosamine biosynthesis; N-acetyl-alpha-D-glucosamine 1-phosphate from alpha-D-glucosamine 6-phosphate (route II): step 2/2. The protein operates within nucleotide-sugar biosynthesis; UDP-N-acetyl-alpha-D-glucosamine biosynthesis; UDP-N-acetyl-alpha-D-glucosamine from N-acetyl-alpha-D-glucosamine 1-phosphate: step 1/1. It participates in bacterial outer membrane biogenesis; LPS lipid A biosynthesis. Its function is as follows. Catalyzes the last two sequential reactions in the de novo biosynthetic pathway for UDP-N-acetylglucosamine (UDP-GlcNAc). The C-terminal domain catalyzes the transfer of acetyl group from acetyl coenzyme A to glucosamine-1-phosphate (GlcN-1-P) to produce N-acetylglucosamine-1-phosphate (GlcNAc-1-P), which is converted into UDP-GlcNAc by the transfer of uridine 5-monophosphate (from uridine 5-triphosphate), a reaction catalyzed by the N-terminal domain. This Escherichia coli O157:H7 (strain EC4115 / EHEC) protein is Bifunctional protein GlmU.